The following is a 784-amino-acid chain: MNKKSLPLMALRDMVVFPGVIAPIFVGRKKSLQALSRTTISEENNSKYILVTLQKKFDQENPSKHELYNTAILAKIIQIVKLPNNTAKILIEAVARVKLSNIKDEEAFEANYEIIPDEEILDIHNMRSLVDNAVQLFSKYAMNDKKVNAEIIETINKEISNRTNFINIINILSSHLITSLETKQQLLEETNPVKRITTVITTLTSNIVNSETEHALQQRVRKQIEKTQRDYYLHEQMKAIQKELDEDKSELADIEKKIKSLKLSKEAKEKAESEFKKLRAMNQMSAESGVTRNYLETLLSLPWGKYDNSKIDINQAEKILNRDHFGLEKVKERIIEYLAVLQRSSKIRGPILCLIGPPGVGKTSLVKSIAEGMGRKYTKFSLGGVRDEAEIRGHRKTYLGSMPGKILGQLKKIKTSNPVMLLDEIDKMSSDFRGDPASALLEVLDPEQNSHFVDHYLEVEYDLSNVVFIATANSHDLPRALSDRMEKIYISGYVEEEKLQIAKNYLVPKQFKMHKIKEDEITISEAAILDLIRYYTKESGVRALEREICALTRKALKQILANKTVKHISIDSNNLEEFLGAKKYNFGLAEKEDQIGSTTGLAYTEVGGELLTIEALAFSGKGEIKTTGKLGDVMKESAMAAYSCFRSRATNFGLKYDNYKDFDIHIHVPAGAIPKDGPSAGCALFTTIVSLMTKIPVHRTVAMTGEITLRGNVLPIGGLKEKLLAASRGGIKTVLIPEENVKDLKDIPPNIKENLEIISVSNIDQVLKHALVEMPINKGLSYDL.

Residues 6 to 207 (LPLMALRDMV…TVITTLTSNI (202 aa)) enclose the Lon N-terminal domain. 356–363 (GPPGVGKT) provides a ligand contact to ATP. A Lon proteolytic domain is found at 592-773 (EDQIGSTTGL…DQVLKHALVE (182 aa)). Active-site residues include serine 679 and lysine 722.

This sequence belongs to the peptidase S16 family. In terms of assembly, homohexamer. Organized in a ring with a central cavity.

The protein localises to the cytoplasm. It carries out the reaction Hydrolysis of proteins in presence of ATP.. Its function is as follows. ATP-dependent serine protease that mediates the selective degradation of mutant and abnormal proteins as well as certain short-lived regulatory proteins. Required for cellular homeostasis and for survival from DNA damage and developmental changes induced by stress. Degrades polypeptides processively to yield small peptide fragments that are 5 to 10 amino acids long. Binds to DNA in a double-stranded, site-specific manner. This Rickettsia prowazekii (strain Madrid E) protein is Lon protease.